Consider the following 289-residue polypeptide: MTTSPTAPVALVTGAAKRLGSSIAEALHAEGYTVCLHYHRSAADASTLAATLNARRPNSAITVQADLSNVATASFSETDGSVPVTLFSRCSALVDACYMHWGRCDVLVNNASSFYPTPLLRKDAGEGGSSVGDKESLEVAAADLFGSNAIAPYFLIKAFAQRVADTRAEQRGTSYSIVNMVDAMTSQPLLGYTMYTMAKEALEGLTRSAALELASLQIRVNGVSPGLSVLPDDMPFSVQEDYRRKVPLYQRNSSAEEVSDVVIFLCSPKAKYITGTCIKVDGGYSLTRA.

NADP(+) is bound at residue 14–41; the sequence is GAAKRLGSSIAEALHAEGYTVCLHYHRS. S176 contacts substrate. Residue Y195 is the Proton acceptor of the active site. 195–199 serves as a coordination point for NADP(+); sequence YTMAK.

This sequence belongs to the short-chain dehydrogenases/reductases (SDR) family. Homotetramer.

It catalyses the reaction (6R)-L-erythro-5,6,7,8-tetrahydrobiopterin + 2 NADP(+) = L-erythro-biopterin + 2 NADPH + 2 H(+). It functions in the pathway cofactor biosynthesis; tetrahydrobiopterin biosynthesis; tetrahydrobiopterin from biopterin: step 1/1. Exhibits a NADPH-dependent biopterin reductase activity. Has good activity with folate and significant activity with dihydrofolate and dihydrobiopterin, but not with quinonoid dihydrobiopterin. Confers resistance to methotrexate (MTX). This is Pteridine reductase 1 (PTR1) from Leishmania tarentolae (Sauroleishmania tarentolae).